The sequence spans 520 residues: RNA polymerase sigma factor sigA (520 aa).

The N-terminal 66 residues, 1–66, are a transit peptide targeting the chloroplast; it reads MTATPAVIGL…APATPKLTAV (66 aa). A compositionally biased stretch (gly residues) spans 37 to 49; it reads GGGGGGGGGGGGD. Disordered stretches follow at residues 37–57, 87–117, and 171–190; these read GGGG…APPA, HHSS…AHAH, and SVSA…TKNG. Positions 96 to 108 are enriched in pro residues; it reads APPPPPPPPPTPS. The span at 175–187 shows a compositional bias: basic residues; it reads RQRRMSGRRRGRT. A Polymerase core binding motif is present at residues 305 to 318; the sequence is DLIQGGLIGLLRGI. A DNA-binding region (H-T-H motif) is located at residues 479-498; sequence WEDISRQFGLSRERVRQVGL.

It belongs to the sigma-70 factor family. As to expression, expressed in shoots. Expressed in the tips of fully elongated leaves. Expressed in leaf blades.

It localises to the plastid. The protein localises to the chloroplast. Functionally, sigma factors are initiation factors that promote the attachment of plastid-encoded RNA polymerase (PEP) to specific initiation sites and are then released. Controls the transcription of the psaA and psaB genes in chloroplast, and thus maintains the abundance of the core protein complex PsaA-PsaB of photosystem I (PSI) in the thylakoid membrane. Maintains PSI activity, sufficient rate of electron transfer from PSII to PSI, and photochemical efficiency. The protein is RNA polymerase sigma factor sigA of Oryza sativa subsp. japonica (Rice).